Consider the following 549-residue polypeptide: Glucose-6-phosphate isomerase (549 aa).

Glu-355 (proton donor) is an active-site residue. Residues His-387 and Lys-515 contribute to the active site.

This sequence belongs to the GPI family.

The protein resides in the cytoplasm. The catalysed reaction is alpha-D-glucose 6-phosphate = beta-D-fructose 6-phosphate. Its pathway is carbohydrate biosynthesis; gluconeogenesis. The protein operates within carbohydrate degradation; glycolysis; D-glyceraldehyde 3-phosphate and glycerone phosphate from D-glucose: step 2/4. In terms of biological role, catalyzes the reversible isomerization of glucose-6-phosphate to fructose-6-phosphate. The sequence is that of Glucose-6-phosphate isomerase from Haemophilus influenzae (strain PittGG).